The chain runs to 67 residues: MPKMKTKSSVKKRFKITATGKVMAGHGNKRHGLINRSQKMKRTNRGTMALPEQDGKTVKQWAPYGLD.

The protein belongs to the bacterial ribosomal protein bL35 family.

The polypeptide is Large ribosomal subunit protein bL35 (Acidiphilium cryptum (strain JF-5)).